The primary structure comprises 257 residues: Dihydroorotate dehydrogenase B (NAD(+)), electron transfer subunit (257 aa).

The FAD-binding FR-type domain occupies 2–102 (MKQEQMTVVR…LGPLGNGFPL (101 aa)). Residues 53-56 (RPLS), 70-72 (IYR), and 77-78 (GT) each bind FAD. Cysteine 221, cysteine 226, cysteine 229, and cysteine 244 together coordinate [2Fe-2S] cluster.

This sequence belongs to the PyrK family. In terms of assembly, heterotetramer of 2 PyrK and 2 PyrD type B subunits. Requires [2Fe-2S] cluster as cofactor. FAD is required as a cofactor.

The protein operates within pyrimidine metabolism; UMP biosynthesis via de novo pathway; orotate from (S)-dihydroorotate (NAD(+) route): step 1/1. In terms of biological role, responsible for channeling the electrons from the oxidation of dihydroorotate from the FMN redox center in the PyrD type B subunit to the ultimate electron acceptor NAD(+). The polypeptide is Dihydroorotate dehydrogenase B (NAD(+)), electron transfer subunit (Geobacillus sp. (strain WCH70)).